The sequence spans 344 residues: tRNA N6-adenosine threonylcarbamoyltransferase (344 aa).

Fe cation contacts are provided by histidine 110 and histidine 114. Substrate is bound by residues 133 to 137 (VVSGA), aspartate 166, glycine 179, and asparagine 278. A Fe cation-binding site is contributed by aspartate 303.

This sequence belongs to the KAE1 / TsaD family. The cofactor is Fe(2+).

It is found in the cytoplasm. The enzyme catalyses L-threonylcarbamoyladenylate + adenosine(37) in tRNA = N(6)-L-threonylcarbamoyladenosine(37) in tRNA + AMP + H(+). Its function is as follows. Required for the formation of a threonylcarbamoyl group on adenosine at position 37 (t(6)A37) in tRNAs that read codons beginning with adenine. Is involved in the transfer of the threonylcarbamoyl moiety of threonylcarbamoyl-AMP (TC-AMP) to the N6 group of A37, together with TsaE and TsaB. TsaD likely plays a direct catalytic role in this reaction. The protein is tRNA N6-adenosine threonylcarbamoyltransferase of Chlamydia abortus (strain DSM 27085 / S26/3) (Chlamydophila abortus).